Reading from the N-terminus, the 70-residue chain is Large ribosomal subunit protein bL31c (70 aa).

This sequence belongs to the bacterial ribosomal protein bL31 family. Type A subfamily. As to quaternary structure, part of the 50S ribosomal subunit.

It is found in the plastid. Its subcellular location is the chloroplast. In terms of biological role, binds the 23S rRNA. The sequence is that of Large ribosomal subunit protein bL31c from Emiliania huxleyi (Coccolithophore).